The chain runs to 137 residues: Type 3 secretion system pilotin (137 aa).

The N-terminal stretch at methionine 1 to serine 14 is a signal peptide.

Belongs to the ExsB/YscW family.

Its subcellular location is the cell outer membrane. Functionally, involved in the synthesis of the type III secretion system (T3SS), also called injectisome, which is used to inject bacterial effector proteins into eukaryotic host cells. Pilot protein that is required for the proper localization of the secretin PscC in the outer membrane. Necessary for full in vivo virulence. The protein is Type 3 secretion system pilotin of Pseudomonas aeruginosa (strain ATCC 15692 / DSM 22644 / CIP 104116 / JCM 14847 / LMG 12228 / 1C / PRS 101 / PAO1).